Reading from the N-terminus, the 314-residue chain is Zinc transporter ZIP3 (314 aa).

Over 1 to 3 the chain is Extracellular; the sequence is MNL. Residues 4 to 24 form a helical membrane-spanning segment; the sequence is IFAKVLCLLAILVLMMLGSLI. Residues 25–41 lie on the Cytoplasmic side of the membrane; it reads PVKISEADFDKSSRSRK. Residues 42–62 form a helical membrane-spanning segment; that stretch reads ILSLSNSFAGGVFLATCFNAL. At 63 to 84 the chain is on the extracellular side; it reads LPAVREKFFDLLKIGNISTDYP. Residues 85-105 form a helical membrane-spanning segment; that stretch reads LAETIMMVGFFLTVFVEQTVM. At 106-169 the chain is on the cytoplasmic side; it reads TFRKEKPSFI…KELSSSSPIR (64 aa). A helical transmembrane segment spans residues 170–190; it reads LFSLVFALSAHSVFEGLALGL. The Extracellular segment spans residues 191-196; the sequence is QEDGNK. A helical transmembrane segment spans residues 197–217; that stretch reads LLSLFIGVVIHETLVAMALGV. The Cytoplasmic segment spans residues 218 to 229; sequence SMAKVNTHLKDA. Residues 230-250 form a helical membrane-spanning segment; it reads IKMAVLVSTMIPIGIVVGMAI. Residues 251-262 are Extracellular-facing; that stretch reads QSAQNMASSIAS. Residues 263–283 traverse the membrane as a helical segment; the sequence is ALLQGIAGGTFIFVTFFEILV. At 284–292 the chain is on the cytoplasmic side; that stretch reads KELEEKNDR. A helical transmembrane segment spans residues 293 to 313; the sequence is LLKVLFLVLGYTVLAVLVLFK. A topological domain (extracellular) is located at residue Trp-314.

It belongs to the ZIP transporter (TC 2.A.5) family.

It localises to the cell membrane. It is found in the apical cell membrane. It carries out the reaction Zn(2+)(in) = Zn(2+)(out). Its function is as follows. Transporter for the divalent cation Zn(2+). Mediates the influx of Zn(2+) into cells from extracellular space. In Xenopus tropicalis (Western clawed frog), this protein is Zinc transporter ZIP3 (slc39a3).